The following is a 280-amino-acid chain: Urease accessory protein UreD (280 aa).

Belongs to the UreD family. UreD, UreF and UreG form a complex that acts as a GTP-hydrolysis-dependent molecular chaperone, activating the urease apoprotein by helping to assemble the nickel containing metallocenter of UreC. The UreE protein probably delivers the nickel.

The protein resides in the cytoplasm. Functionally, required for maturation of urease via the functional incorporation of the urease nickel metallocenter. This chain is Urease accessory protein UreD, found in Staphylococcus saprophyticus subsp. saprophyticus (strain ATCC 15305 / DSM 20229 / NCIMB 8711 / NCTC 7292 / S-41).